The chain runs to 20 residues: Insulin-like growth factor-binding protein 2 (20 aa).

The 19-residue stretch at 2 to 20 folds into the IGFBP N-terminal domain; that stretch reads LVFYCPKCTAERQTACPKL.

Binds IGF2 more than IGF1. In terms of processing, N-glycosylated.

The protein resides in the secreted. Functionally, inhibits IGF-mediated growth and developmental rates. IGF-binding proteins prolong the half-life of the IGFs and have been shown to either inhibit or stimulate the growth promoting effects of the IGFs on cell culture. They alter the interaction of IGFs with their cell surface receptors. The protein is Insulin-like growth factor-binding protein 2 (igfbp2) of Oncorhynchus tshawytscha (Chinook salmon).